The primary structure comprises 1705 residues: MAQFGTPFGGNLDIWAITVEERAKHDQQFHGLKPTAGYITGDQARNFFLQSGLPQPVLAQIWALADMNNDGRMDQLEFSIAMKLIKLKLQGYPLPSILPSNMLKQPVAMPAAAVAGFGMSGIVGIPPLAAVAPVPMPSIPVVGMSPPLVSSVPTVPPLSNGAPAVIQSHPAFAHSATLPKSSSFGRSVAGSQINTKLQKAQSFDVPAPPLVVEWAVPSSSRLKYRQLFNSQDKTMSGNLTGPQARTILMQSSLPQSQLATIWNLSDIDQDGKLTAEEFILAMHLIDVAMSGQPLPPILPPEYIPPSFRRVRSGSGLSIMSSVSVDQRLPEEPEEEEPQNADKKLPVTFEDKKRENFERGNLELEKRRQALLEQQRKEQERLAQLERAEQERKERERQDQERKRQQDLEKQLEKQRELERQREEERRKEIERREAAKRELERQRQLEWERNRRQELLNQRNREQEDIVVLKAKKKTLEFELEALNDKKHQLEGKLQDIRCRLTTQRHEIESTNKSRELRIAEITHLQQQLQESQQLLGKMIPEKQSLNDQLKQVQQNSLHRDSLLTLKRALETKEIGRQQLRDQLDEVEKETRAKLQEIDVFNNQLKELRELYNKQQFQKQQDFETEKIKQKELERKTSELDKLKEEDKRRMLEHDKLWQDRVKQEEERYKFQDEEKEKREESIQKCEVEKKPEIQEKPNKPFHQPPEPGKLGGQIPWMNTEKAPLTINQGDVKVVYYRALYPFDARSHDEITIEPGDIIMVDESQTGEPGWLGGELKGKTGWFPANYAERMPESEFPSTTKPAAETTAKPTVHVAPSPVAPAAFTNTSTNSNNWADFSSTWPTNNTDKVESDNWDTWAAQPSLTVPSAGQHRQRSAFTPATVTGSSPSPVLGQGEKVEGLQAQALYPWRAKKDNHLNFNKNDVITVLEQQDMWWFGEVQGQKGWFPKSYVKLISGPLRKSTSIDSTSSESPASLKRVSSPAFKPAIQGEEYISMYTYESNEQGDLTFQQGDLIVVIKKDGDWWTGTVGEKTGVFPSNYVRPKDSEAAGSGGKTGSLGKKPEIAQVIASYAATGPEQLTLAPGQLILIRKKNPGGWWEGELQARGKKRQIGWFPANYVKLLSPGTNKSTPTEPPKPTSLPPTCQVIGMYDYIAQNDDELAFSKGQVINVLNKEDPDWWKGELNGHVGLFPSNYVKLTTDMDPSQQWCADLHLLDMLSPTERKRQGYIHELIVTEENYVSDLQLVTETFQKPLLESDLLTEKEVAMIFVNWKELIMCNIKLLKALRVRKKMSGEKMPVKMIGDILTAQLPHMQPYIRFCSCQLNGAALIQQKTDEVPEFKEFVKRLAMDPRCKGMPLSSFLLKPMQRVTRYPLIIKNIIENTPENHPDHSHLKQALEKAEELCSQVNEGVREKENSDRLEWIQGHVQCEGLSEQLVFNSVTNCLGPRKFLHSGKLYKAKSNKELYGFLFNDFLLLTQIIKPLGSSGNDKVFSPKSNLQYKMYKTPIFLNEVLVKLPTDPSGDEPIFHISHIDRVYTLRAESINERTAWVQKIKAASELYIETEKKKREKAYLVRSQRATGIGRLMVNIVEGIELKPCRTHGKSNPYCEITMGSQCHITKTIQDTLNPKWNSNCQFFIKDLEQDVLCITVFERDQFSPDDFLGRTEIRVADIKKDQGSKGPVTKCLLLHEVPTGEIVVRLDLQLFDEP.

2 consecutive EH domains span residues 21–109 and 220–309; these read ERAK…PVAM and SRLK…SFRR. EF-hand domains are found at residues 53–88 and 253–288; these read LPQPVLAQIWALADMNNDGRMDQLEFSIAMKLIKLK and LPQSQLATIWNLSDIDQDGKLTAEEFILAMHLIDVA. Residues D66, N68, D70, R72, E77, D266, D268, D270, K272, and E277 each coordinate Ca(2+). Disordered regions lie at residues 322-355, 386-433, and 668-708; these read VSVDQRLPEEPEEEEPQNADKKLPVTFEDKKREN, RAEQ…ERRE, and RYKF…PPEP. Residues 325–697 form a KLERQ region; the sequence is DQRLPEEPEE…VEKKPEIQEK (373 aa). The segment covering 339 to 355 has biased composition (basic and acidic residues); sequence NADKKLPVTFEDKKREN. Positions 350-687 form a coiled coil; the sequence is DKKRENFERG…KREESIQKCE (338 aa). Basic and acidic residues predominate over residues 668–699; that stretch reads RYKFQDEEKEKREESIQKCEVEKKPEIQEKPN. Positions 732-793 constitute an SH3 1 domain; that stretch reads VKVVYYRALY…PANYAERMPE (62 aa). Positions 823–833 are enriched in low complexity; the sequence is AFTNTSTNSNN. Positions 823–851 are disordered; sequence AFTNTSTNSNNWADFSSTWPTNNTDKVES. Polar residues predominate over residues 834-846; the sequence is WADFSSTWPTNNT. The SH3 2 domain occupies 897 to 955; the sequence is VEGLQAQALYPWRAKKDNHLNFNKNDVITVLEQQDMWWFGEVQGQKGWFPKSYVKLISG. The disordered stretch occupies residues 959–978; sequence KSTSIDSTSSESPASLKRVS. The span at 960-973 shows a compositional bias: low complexity; sequence STSIDSTSSESPAS. 3 SH3 domains span residues 986 to 1044, 1058 to 1122, and 1139 to 1198; these read IQGE…PKDS, KKPE…LLSP, and PPTC…LTTD. The short motif at 1088 to 1111 is the Bipartite nuclear localization signal; in isoform 2 element; the sequence is RKKNPGGWWEGELQARGKKRQIGW. The region spanning 1221 to 1407 is the DH domain; that stretch reads KRQGYIHELI…EELCSQVNEG (187 aa). The 110-residue stretch at 1446–1555 folds into the PH domain; that stretch reads KFLHSGKLYK…WVQKIKAASE (110 aa). A C2 domain is found at 1563-1679; sequence KKREKAYLVR…KKDQGSKGPV (117 aa). D1651, S1654, and D1657 together coordinate Ca(2+).

As to quaternary structure, binds epn1 and epn2. Ca(2+) is required as a cofactor.

The protein resides in the endomembrane system. The protein localises to the synapse. It is found in the synaptosome. Its subcellular location is the cell projection. It localises to the lamellipodium. The protein resides in the cell membrane. The protein localises to the membrane. It is found in the clathrin-coated pit. Its subcellular location is the recycling endosome. It localises to the cytoplasm. The protein resides in the nucleus envelope. In terms of biological role, adapter protein that provides a link between the endocytic membrane traffic and the actin assembly machinery. Acts as a guanine nucleotide exchange factor (GEF) for cdc42, and thereby stimulates actin nucleation mediated by wasl and the arp2/3 complex. Involved in endocytosis of activated egfr, and probably also other growth factor receptors. This Xenopus laevis (African clawed frog) protein is Intersectin-1 (itsn1).